An 835-amino-acid polypeptide reads, in one-letter code: Pre-mRNA-splicing factor SYF1 (835 aa).

10 HAT repeats span residues 7 to 38 (YILDDSDIAFEYELQKSPSVEVWQRYIAHWEA), 46 to 77 (RSARHILWLYERMVTQFPTLTVWEQYIGWFRR), 313 to 348 (ADFDKMEKVLTKALSETVKTNEFIAIYTYHVNFEQA), 414 to 456 (EDFD…VYWS), 458 to 494 (KSYEEARTIYESATKVPFPDLQDLEIVWHTWAVNEFQ), 517 to 551 (SIIDRFKSENRRLPSQTILFTSKRLWNYYIDLLES), 589 to 623 (NNLHGSLQVYEKGINMFPPEICYELWTLLLDEVME), 628 to 664 (ATKERIRELFEQCLQQLGNTDININSIYVKYSDFEIH), 707 to 741 (LGPDSLRQLLSECIQELPNSKAITYVLKFTKLEMS), and 743 to 777 (SDYTRARELLQYGAQLLPPIKNEELWGLWEQFELE).

The protein belongs to the crooked-neck family. As to quaternary structure, associated with the spliceosome.

Its subcellular location is the nucleus. Involved in pre-mRNA splicing and cell cycle progression. This Candida glabrata (strain ATCC 2001 / BCRC 20586 / JCM 3761 / NBRC 0622 / NRRL Y-65 / CBS 138) (Yeast) protein is Pre-mRNA-splicing factor SYF1 (SYF1).